Reading from the N-terminus, the 61-residue chain is Small ribosomal subunit protein uS14 (61 aa).

Zn(2+)-binding residues include C24, C27, C40, and C43.

This sequence belongs to the universal ribosomal protein uS14 family. Zinc-binding uS14 subfamily. In terms of assembly, part of the 30S ribosomal subunit. Contacts proteins S3 and S10. Requires Zn(2+) as cofactor.

Its function is as follows. Binds 16S rRNA, required for the assembly of 30S particles and may also be responsible for determining the conformation of the 16S rRNA at the A site. The chain is Small ribosomal subunit protein uS14 from Borreliella afzelii (strain PKo) (Borrelia afzelii).